The primary structure comprises 122 residues: Large ribosomal subunit protein uL14 (122 aa).

It belongs to the universal ribosomal protein uL14 family. As to quaternary structure, part of the 50S ribosomal subunit. Forms a cluster with proteins L3 and L19. In the 70S ribosome, L14 and L19 interact and together make contacts with the 16S rRNA in bridges B5 and B8.

In terms of biological role, binds to 23S rRNA. Forms part of two intersubunit bridges in the 70S ribosome. This chain is Large ribosomal subunit protein uL14, found in Magnetococcus marinus (strain ATCC BAA-1437 / JCM 17883 / MC-1).